The sequence spans 254 residues: Translation initiation factor 2 subunit alpha (254 aa).

In terms of domain architecture, S1 motif spans 10–81 (GDLVVVKITE…ERKNVDLSLK (72 aa)).

The protein belongs to the eIF-2-alpha family. As to quaternary structure, heterotrimer composed of an alpha, a beta and a gamma chain.

Functionally, eIF-2 functions in the early steps of protein synthesis by forming a ternary complex with GTP and initiator tRNA. This is Translation initiation factor 2 subunit alpha from Thermoplasma volcanium (strain ATCC 51530 / DSM 4299 / JCM 9571 / NBRC 15438 / GSS1).